Consider the following 447-residue polypeptide: Putative branched-chain amino acid carrier protein SE_1090 (447 aa).

The next 12 membrane-spanning stretches (helical) occupy residues 5-25 (TWII…LIFP), 40-60 (ILAF…VGAL), 74-94 (PRFS…LFAI), 114-134 (GNLA…YLCL), 143-163 (IGSL…IKGF), 193-213 (GYLT…VNAI), 229-249 (IIAG…LGYI), 290-310 (LLGI…IVSV), 317-337 (ILPK…SFIL), 350-370 (VPVL…ILIA), 382-402 (IPLI…QGWI), and 417-437 (LEWF…SYFV).

Belongs to the branched chain amino acid transporter family.

It is found in the cell membrane. Its function is as follows. Component of the transport system for branched-chain amino acids (leucine, isoleucine and valine), which is coupled to a proton motive force. The protein is Putative branched-chain amino acid carrier protein SE_1090 of Staphylococcus epidermidis (strain ATCC 12228 / FDA PCI 1200).